Reading from the N-terminus, the 62-residue chain is Beta-defensin 10 (62 aa).

Positions 1 to 22 (MRLHHLLLLLLLVVLSSGSGFT) are cleaved as a signal peptide. Glutamine 23 carries the post-translational modification Pyrrolidone carboxylic acid. 3 disulfides stabilise this stretch: cysteine 31-cysteine 60, cysteine 38-cysteine 53, and cysteine 43-cysteine 61.

This sequence belongs to the beta-defensin family. Neutrophilic granules.

Its subcellular location is the secreted. In terms of biological role, has bactericidal activity. Active against E.coli ML35 and S.aureus 502A. The polypeptide is Beta-defensin 10 (DEFB10) (Bos taurus (Bovine)).